Here is a 239-residue protein sequence, read N- to C-terminus: tRNA uridine(34) hydroxylase (239 aa).

The region spanning 124-214 (QGRELVMLDT…GILKYFEETD (91 aa)) is the Rhodanese domain. Cys178 serves as the catalytic Cysteine persulfide intermediate.

The protein belongs to the TrhO family.

It catalyses the reaction uridine(34) in tRNA + AH2 + O2 = 5-hydroxyuridine(34) in tRNA + A + H2O. In terms of biological role, catalyzes oxygen-dependent 5-hydroxyuridine (ho5U) modification at position 34 in tRNAs. In Bordetella parapertussis (strain 12822 / ATCC BAA-587 / NCTC 13253), this protein is tRNA uridine(34) hydroxylase.